The primary structure comprises 218 residues: Ras-related protein RABA1i (218 aa).

20 to 27 (GDSGVGKS) is a binding site for GTP. The short motif at 42 to 50 (SRATIGVEF) is the Effector region element. Residues 68-72 (DTAGQ), 126-129 (NKAD), and 156-157 (SA) contribute to the GTP site. 2 S-geranylgeranyl cysteine lipidation sites follow: C215 and C216.

This sequence belongs to the small GTPase superfamily. Rab family.

It localises to the cell membrane. In terms of biological role, intracellular vesicle trafficking and protein transport. This Arabidopsis thaliana (Mouse-ear cress) protein is Ras-related protein RABA1i (RABA1I).